A 158-amino-acid polypeptide reads, in one-letter code: NAD(P)H-quinone oxidoreductase subunit J, chloroplastic (158 aa).

Belongs to the complex I 30 kDa subunit family. As to quaternary structure, NDH is composed of at least 16 different subunits, 5 of which are encoded in the nucleus.

The protein localises to the plastid. It is found in the chloroplast thylakoid membrane. The catalysed reaction is a plastoquinone + NADH + (n+1) H(+)(in) = a plastoquinol + NAD(+) + n H(+)(out). The enzyme catalyses a plastoquinone + NADPH + (n+1) H(+)(in) = a plastoquinol + NADP(+) + n H(+)(out). In terms of biological role, NDH shuttles electrons from NAD(P)H:plastoquinone, via FMN and iron-sulfur (Fe-S) centers, to quinones in the photosynthetic chain and possibly in a chloroplast respiratory chain. The immediate electron acceptor for the enzyme in this species is believed to be plastoquinone. Couples the redox reaction to proton translocation, and thus conserves the redox energy in a proton gradient. This is NAD(P)H-quinone oxidoreductase subunit J, chloroplastic from Morus indica (Mulberry).